A 211-amino-acid polypeptide reads, in one-letter code: Thymidylate kinase (211 aa).

10–17 (GVEGCGKT) is an ATP binding site.

The protein belongs to the thymidylate kinase family.

The catalysed reaction is dTMP + ATP = dTDP + ADP. Phosphorylation of dTMP to form dTDP in both de novo and salvage pathways of dTTP synthesis. The sequence is that of Thymidylate kinase from Nostoc sp. (strain PCC 7120 / SAG 25.82 / UTEX 2576).